A 240-amino-acid polypeptide reads, in one-letter code: Putative RING finger protein ORF96 (240 aa).

The RING-type 1 zinc finger occupies 9–44 (CVVCMEEKPLVVFEPCMHHNCCESCSGHVSNCPYCR). Residues 150 to 202 (CVICKKEIKEEVGKTYMHACCTATICKPCAKAILKAMVEKEITENLPFCPYCF) form an RING-type 2; degenerate zinc finger.

The polypeptide is Putative RING finger protein ORF96 (Ostreid herpesvirus 1 (isolate France) (OsHV-1)).